Here is a 288-residue protein sequence, read N- to C-terminus: Probable sulfate transport system permease protein cysT (288 aa).

7 consecutive transmembrane segments (helical) span residues 28–48 (FLLI…VTAL), 77–97 (FLTA…LAWI), 111–131 (AAVD…LMTV), 149–169 (IAFS…PFIV), 198–218 (FWNV…ALGF), 227–247 (SIVL…VLIF), and 261–281 (IASV…YIYL). Positions 73-276 (YKVTFLTAAL…LVSFAILLII (204 aa)) constitute an ABC transmembrane type-1 domain.

Belongs to the binding-protein-dependent transport system permease family. CysTW subfamily.

The protein localises to the plastid. It is found in the chloroplast membrane. Its function is as follows. Part of the ABC transporter complex cysAWTP (TC 3.A.1.6.1) involved in sulfate/thiosulfate import. Probably responsible for the translocation of the substrate across the membrane. The sequence is that of Probable sulfate transport system permease protein cysT (cysT) from Zygnema circumcarinatum (Green alga).